Here is a 353-residue protein sequence, read N- to C-terminus: Melatonin receptor type 1A (353 aa).

A disordered region spans residues 1–26 (MRANGSELNGTVLPRDPPAEGSPRRP). Residues 1–32 (MRANGSELNGTVLPRDPPAEGSPRRPPWVTST) lie on the Extracellular side of the membrane. Residues asparagine 4 and asparagine 9 are each glycosylated (N-linked (GlcNAc...) asparagine). The chain crosses the membrane as a helical span at residues 33 to 53 (LATILIFTIVVDLLGNLLVIL). Over 54–66 (SVYRNKKLRNAGN) the chain is Cytoplasmic. The helical transmembrane segment at 67–87 (IFVVSLAIADLVVAIYPYPLV) threads the bilayer. At 88-105 (LTSVFHNGWNLGYLHCQI) the chain is on the extracellular side. Cysteine 103 and cysteine 180 are oxidised to a cystine. The chain crosses the membrane as a helical span at residues 106–126 (SGFLMGLSVIGSIFNITGIAI). At 127–145 (NRYCYICHSLKYDKLYSDK) the chain is on the cytoplasmic side. A helical membrane pass occupies residues 146–166 (NSLCYVGLIWVLTVVAIVPNL). Residues 167-190 (FVGSLQYDPRIYSCTFAQSVSSAY) lie on the Extracellular side of the membrane. A helical transmembrane segment spans residues 191–211 (TIAVVFFHFILPIAIVTYCYL). Over 212-243 (RIWILVIQVRRRVKPDNNPRLKPHDFRNFVTM) the chain is Cytoplasmic. The helical transmembrane segment at 244 to 264 (FVVFVLFAVCWAPLNFIGLAV) threads the bilayer. The Extracellular portion of the chain corresponds to 265 to 277 (AVDPETIIPRIPE). A helical membrane pass occupies residues 278–298 (WLFVSSYYMAYFNSCLNAIIY). Over 299–353 (GLLNQNFRREYKKIVVSFCTAKAFFQDSSNDAADRIRSKPSPLITNNNQVKVDSV) the chain is Cytoplasmic.

It belongs to the G-protein coupled receptor 1 family. Expressed in optic tectum and retina, less in neostriatum, hypothalamus and thalamus.

It is found in the cell membrane. Its function is as follows. High affinity receptor for melatonin. The activity of this receptor is mediated by pertussis toxin sensitive G proteins that inhibits adenylate cyclase activity. In Gallus gallus (Chicken), this protein is Melatonin receptor type 1A.